A 108-amino-acid chain; its full sequence is C-C motif chemokine 19 (108 aa).

Residues 1-25 (MAPRVTPLLAFSLLVLWTFPAPTLG) form the signal peptide. 2 disulfides stabilise this stretch: Cys-33/Cys-59 and Cys-34/Cys-75. Asn-100 is a glycosylation site (N-linked (GlcNAc...) asparagine).

This sequence belongs to the intercrine beta (chemokine CC) family. As to quaternary structure, interacts with TNFAIP6 (via Link domain). As to expression, highly expressed by dendritic cells in mesenteric and peripheral lymph nodes. Significant expression in spleen (T cell zone or periarteriolar lymphatic sheath) and Peyer patches. Low expression in thymus.

Its subcellular location is the secreted. Strongly chemotactic for naive (L-selectinhi) CD4 T-cells and for CD8 T-cells and weakly attractive for resting B-cells and memory (L-selectinlo) CD4 T-cells. May play a role in promoting encounters between recirculating T-cells and dendritic cells and in the migration of activated B-cells into the T-zone of secondary lymphoid tissues. Binds to chemokine receptor CCR7. Binds to atypical chemokine receptor ACKR4 and mediates the recruitment of beta-arrestin (ARRB1/2) to ACKR4. This Mus musculus (Mouse) protein is C-C motif chemokine 19 (Ccl19).